The sequence spans 233 residues: tRNA (guanine-N(7)-)-methyltransferase (233 aa).

S-adenosyl-L-methionine-binding residues include Glu-62, Glu-87, Asp-114, and Asp-136. Asp-136 is an active-site residue. Residues Lys-140, Asp-172, and 211–214 contribute to the substrate site; that span reads TRYE.

It belongs to the class I-like SAM-binding methyltransferase superfamily. TrmB family.

The enzyme catalyses guanosine(46) in tRNA + S-adenosyl-L-methionine = N(7)-methylguanosine(46) in tRNA + S-adenosyl-L-homocysteine. It functions in the pathway tRNA modification; N(7)-methylguanine-tRNA biosynthesis. In terms of biological role, catalyzes the formation of N(7)-methylguanine at position 46 (m7G46) in tRNA. The protein is tRNA (guanine-N(7)-)-methyltransferase of Erythrobacter litoralis (strain HTCC2594).